Reading from the N-terminus, the 522-residue chain is Sugar carrier protein A (522 aa).

Residues 1–22 (MAGGSLAPAGVAKERAEQYQGK) are Cytoplasmic-facing. A run of 12 helical transmembrane segments spans residues 23-43 (VTFAVFVACMVAAVGGSIFGY), 87-107 (AFTSSLYLAGLAASLVAGPIT), 121-141 (ISFLIGAALNATAINLAMLLL), 144-164 (IMLGVGIGFGNQAVPLYLSEM), 173-193 (LNIMFQLATTSGIFTANMVNY), 205-225 (LSLGLAAAPALLMTIGGLLLP), 286-306 (LVMAIFMPTFQILTGINIILF), 322-342 (ALYSSAVTGAVLCSSTFISIA), 351-371 (FLLISGGIQMITCQVIVAIIL), 384-404 (SFSVLVVIMICLFVLAFGWSW), 430-450 (AVNLFFTFVIAQSFPSLLCAF), and 453-473 (GIFLFFAGWVTVMTAFVYIFL). Residues 474-522 (PETKGVPIEEMIFLWRKHWFWKKIVPGQPEVDDSRESMEMGEAVASRIK) lie on the Cytoplasmic side of the membrane.

The protein belongs to the major facilitator superfamily. Sugar transporter (TC 2.A.1.1) family.

It localises to the membrane. This Ricinus communis (Castor bean) protein is Sugar carrier protein A (STA).